A 321-amino-acid chain; its full sequence is MATH domain and coiled-coil domain-containing protein At3g58260 (321 aa).

One can recognise an MATH domain in the interval 6-135 (NNTFTWVIKN…NDEVMVAVAV (130 aa)). Residues 232-283 (KLDWLEKKLDELFEKKKEEADKIRMQNIEEELKDLRQKCSSLEALLKKEKTG) are a coiled coil.

This is MATH domain and coiled-coil domain-containing protein At3g58260 from Arabidopsis thaliana (Mouse-ear cress).